Here is a 210-residue protein sequence, read N- to C-terminus: NAD(P)H-quinone oxidoreductase subunit I (210 aa).

2 consecutive 4Fe-4S ferredoxin-type domains span residues 55-84 (GRIH…VDWV) and 95-124 (RNYS…MTEE). Residues cysteine 64, cysteine 67, cysteine 70, cysteine 74, cysteine 104, cysteine 107, cysteine 110, and cysteine 114 each contribute to the [4Fe-4S] cluster site.

This sequence belongs to the complex I 23 kDa subunit family. As to quaternary structure, NDH-1 is composed of at least 11 different subunits. Requires [4Fe-4S] cluster as cofactor.

It is found in the cellular thylakoid membrane. It carries out the reaction a plastoquinone + NADH + (n+1) H(+)(in) = a plastoquinol + NAD(+) + n H(+)(out). The enzyme catalyses a plastoquinone + NADPH + (n+1) H(+)(in) = a plastoquinol + NADP(+) + n H(+)(out). NDH-1 shuttles electrons from an unknown electron donor, via FMN and iron-sulfur (Fe-S) centers, to quinones in the respiratory and/or the photosynthetic chain. The immediate electron acceptor for the enzyme in this species is believed to be plastoquinone. Couples the redox reaction to proton translocation, and thus conserves the redox energy in a proton gradient. The protein is NAD(P)H-quinone oxidoreductase subunit I of Synechococcus sp. (strain CC9902).